A 703-amino-acid polypeptide reads, in one-letter code: Elongation factor G (703 aa).

Residues 9–292 (ERTRNIGIMA…AVVDYLPGPL (284 aa)) form the tr-type G domain. GTP-binding positions include 18–25 (AHIDAGKT), 91–95 (DTPGH), and 145–148 (NKMD).

It belongs to the TRAFAC class translation factor GTPase superfamily. Classic translation factor GTPase family. EF-G/EF-2 subfamily.

It localises to the cytoplasm. Its function is as follows. Catalyzes the GTP-dependent ribosomal translocation step during translation elongation. During this step, the ribosome changes from the pre-translocational (PRE) to the post-translocational (POST) state as the newly formed A-site-bound peptidyl-tRNA and P-site-bound deacylated tRNA move to the P and E sites, respectively. Catalyzes the coordinated movement of the two tRNA molecules, the mRNA and conformational changes in the ribosome. The sequence is that of Elongation factor G from Leuconostoc mesenteroides subsp. mesenteroides (strain ATCC 8293 / DSM 20343 / BCRC 11652 / CCM 1803 / JCM 6124 / NCDO 523 / NBRC 100496 / NCIMB 8023 / NCTC 12954 / NRRL B-1118 / 37Y).